A 266-amino-acid chain; its full sequence is PDZ domain-containing protein 9 (266 aa).

Residues 27 to 109 (KVIQTKLTVG…GTVLQIKAYR (83 aa)) enclose the PDZ domain.

The sequence is that of PDZ domain-containing protein 9 (Pdzd9) from Mus musculus (Mouse).